Reading from the N-terminus, the 545-residue chain is Glutamine-dependent NAD(+) synthetase (545 aa).

Positions Leu5 to Arg247 constitute a CN hydrolase domain. The active-site Proton acceptor; for glutaminase activity is Glu46. The active-site For glutaminase activity is Lys113. Tyr119 is a binding site for L-glutamine. Cys151 (nucleophile; for glutaminase activity) is an active-site residue. L-glutamine is bound by residues Ser177 and Lys183. Residues Val269–Gly545 are ligase. Residue Gly292–Ser299 participates in ATP binding. Position 375 (Asn375) interacts with deamido-NAD(+). Residue Thr399 coordinates ATP. The deamido-NAD(+) site is built by Glu404 and Lys516.

The protein in the C-terminal section; belongs to the NAD synthetase family.

It catalyses the reaction deamido-NAD(+) + L-glutamine + ATP + H2O = L-glutamate + AMP + diphosphate + NAD(+) + H(+). Its pathway is cofactor biosynthesis; NAD(+) biosynthesis; NAD(+) from deamido-NAD(+) (L-Gln route): step 1/1. Its function is as follows. Catalyzes the ATP-dependent amidation of deamido-NAD to form NAD. Uses L-glutamine as a nitrogen source. The polypeptide is Glutamine-dependent NAD(+) synthetase (Xylella fastidiosa (strain Temecula1 / ATCC 700964)).